The sequence spans 185 residues: Probable nicotinate-nucleotide adenylyltransferase (185 aa).

It belongs to the NadD family.

The enzyme catalyses nicotinate beta-D-ribonucleotide + ATP + H(+) = deamido-NAD(+) + diphosphate. The protein operates within cofactor biosynthesis; NAD(+) biosynthesis; deamido-NAD(+) from nicotinate D-ribonucleotide: step 1/1. In terms of biological role, catalyzes the reversible adenylation of nicotinate mononucleotide (NaMN) to nicotinic acid adenine dinucleotide (NaAD). The sequence is that of Probable nicotinate-nucleotide adenylyltransferase from Methylorubrum extorquens (strain PA1) (Methylobacterium extorquens).